The primary structure comprises 1391 residues: Enhancer of mRNA-decapping protein 4 (1391 aa).

4 WD repeats span residues 170 to 210, 226 to 274, 292 to 331, and 340 to 390; these read GITG…GKIQ, SIFR…TNHN, GHSG…QDQP, and HNGR…SLQT. 2 disordered regions span residues 703-724 and 897-924; these read QASP…AMPQ and DWKS…LAKS. The segment covering 915-924 has biased composition (basic and acidic residues); the sequence is KKDEMELAKS. Positions 935-968 form a coiled coil; that stretch reads ELQEELLCMLRSQQKELSDLRQNQLELMKKLTDH.

It belongs to the WD repeat EDC4 family.

It is found in the cytoplasm. Its subcellular location is the P-body. The protein resides in the nucleus. Its function is as follows. In the process of mRNA degradation, seems to play a role in mRNA decapping. This Xenopus laevis (African clawed frog) protein is Enhancer of mRNA-decapping protein 4 (edc4).